We begin with the raw amino-acid sequence, 752 residues long: DNA helicase/primase complex-associated protein (752 aa).

Belongs to the herpesviridae HEPA family. Associates with the primase and the helicase to form the helicase-primase complex. Interacts with the origin-binding protein. Interacts with the polymerase catalytic subunit.

Its subcellular location is the host nucleus. Functionally, component of the helicase/primase complex. Unwinds the DNA at the replication forks and generates single-stranded DNA for both leading and lagging strand synthesis. The primase synthesizes short RNA primers on the lagging strand that the polymerase presumably elongates using dNTPs. The primase-associated factor has no known catalytic activity in the complex and may serve to facilitate the formation of the replisome by directly interacting with the origin-binding protein and the polymerase. The polypeptide is DNA helicase/primase complex-associated protein (Homo sapiens (Human)).